A 506-amino-acid chain; its full sequence is Alpha-L-fucosidase 1 (506 aa).

Positions methionine 1–serine 23 are cleaved as a signal peptide. Residues asparagine 22, asparagine 82, asparagine 248, asparagine 320, asparagine 355, and asparagine 487 are each glycosylated (N-linked (GlcNAc...) asparagine).

Belongs to the glycosyl hydrolase 29 family.

It localises to the secreted. The protein localises to the extracellular space. Its subcellular location is the apoplast. The catalysed reaction is an alpha-L-fucoside + H2O = L-fucose + an alcohol. Functionally, hydrolyzes both 3- and 4-linked fucoses in Lewis determinants. Not active on neither 2-linked fucose nor on fucose in alpha-1,3-linkage to the innermost GlcNAc. This chain is Alpha-L-fucosidase 1 (FUC1), found in Arabidopsis thaliana (Mouse-ear cress).